A 1248-amino-acid chain; its full sequence is Cullin-associated NEDD8-dissociated protein 1 (1248 aa).

11 HEAT repeats span residues 44-82 (DESE…KVKE), 127-165 (PNVC…RFGE), 168-206 (VPFH…QANS), 365-403 (EDFY…NTRL), 425-463 (IEQL…SLPG), 510-548 (HPHI…VIRP), 604-642 (QNEL…LRID), 644-682 (TPIL…NYSS), 861-900 (DLSS…GSLQ), 976-1014 (LVNP…DQPQ), and 1054-1093 (PSLV…TVDD).

This sequence belongs to the CAND family.

In terms of biological role, key assembly factor of SCF (SKP1-CUL1-F-box protein) E3 ubiquitin ligase complexes that promotes the exchange of the substrate-recognition F-box subunit in SCF complexes, thereby playing a key role in the cellular repertoire of SCF complexes. Acts as a F-box protein exchange factor. Probably plays a similar role in other cullin-RING E3 ubiquitin ligase complexes. In Drosophila melanogaster (Fruit fly), this protein is Cullin-associated NEDD8-dissociated protein 1 (Cand1).